Reading from the N-terminus, the 482-residue chain is MALPPFFAQSRQGPPPPQPPPSAPFGCPPPPLPSPAFPPPLPQRPGPFPGASAPFLQPPLALQPRAPAEASRGGGGGGAFFPVPPPPLPPPPPQCRPFPGPDAVERPRPPPPGPGPPWSPRWAEAPPPPDVLGDAALQRLRDRQWLEAVFGNPRRPGGLRTPRTPAGPSLGEVRARLRSALRLVRRLRSLGQSLREAEADGAAWASLHAQAAPLRAELAERLQPLRQAAYVGEARRRLERVRRRVRVRERARDRRLSGRRGAQRTEREQEIDRWRVKCVQEVEEKKRDEELKAAADGVLAEVRKKQSDTKRMVDILRALEKLRKLRKEAAARKGVCPPASADETFEHHLQRLRKLIKKRSELYEAEERALRVMLEGEQEEERRRELEKKQRKEKEKLLLQKREIESKLFGDPDEFPLAHLLQPFRQYYLQAEHSLPALIQIRHDWDQYLVPSDHPKGNSVPQGWVLPPLPSNDIWATAIQLH.

2 disordered regions span residues 1 to 136 (MALP…GDAA) and 151 to 170 (GNPR…GPSL). A compositionally biased stretch (pro residues) spans 13-48 (GPPPPQPPPSAPFGCPPPPLPSPAFPPPLPQRPGPF). The span at 49–71 (PGASAPFLQPPLALQPRAPAEAS) shows a compositional bias: low complexity. Pro residues-rich tracts occupy residues 82-100 (PVPP…PFPG) and 109-130 (PPPP…PPPD). Low complexity predominate over residues 151 to 168 (GNPRRPGGLRTPRTPAGP). Positions 233 to 408 (EARRRLERVR…LQKREIESKL (176 aa)) form a coiled coil.

In terms of assembly, interacts with RBM40. Component of the U11/U12 snRNPs that are part of the U12-type spliceosome. In terms of tissue distribution, highly expressed in testis, thymus and lymph nodes. Detected at low levels in embryonic stem cells.

The protein resides in the nucleus. Its function is as follows. Promotes apoptosis when overexpressed. The sequence is that of Programmed cell death protein 7 (Pdcd7) from Mus musculus (Mouse).